A 45-amino-acid chain; its full sequence is Photosystem II reaction center protein K (45 aa).

Positions 1–8 (MEAALLLA) are excised as a propeptide. Residues 24 to 44 (LPIIPVFFLLLAFVWQAAVGF) form a helical membrane-spanning segment.

It belongs to the PsbK family. As to quaternary structure, PSII is composed of 1 copy each of membrane proteins PsbA, PsbB, PsbC, PsbD, PsbE, PsbF, PsbH, PsbI, PsbJ, PsbK, PsbL, PsbM, PsbT, PsbX, PsbY, PsbZ, Psb30/Ycf12, peripheral proteins PsbO, CyanoQ (PsbQ), PsbU, PsbV and a large number of cofactors. It forms dimeric complexes.

It localises to the cellular thylakoid membrane. Its function is as follows. One of the components of the core complex of photosystem II (PSII). PSII is a light-driven water:plastoquinone oxidoreductase that uses light energy to abstract electrons from H(2)O, generating O(2) and a proton gradient subsequently used for ATP formation. It consists of a core antenna complex that captures photons, and an electron transfer chain that converts photonic excitation into a charge separation. The protein is Photosystem II reaction center protein K of Nostoc sp. (strain PCC 7120 / SAG 25.82 / UTEX 2576).